The following is a 140-amino-acid chain: ATP synthase epsilon chain (140 aa).

The protein belongs to the ATPase epsilon chain family. As to quaternary structure, F-type ATPases have 2 components, CF(1) - the catalytic core - and CF(0) - the membrane proton channel. CF(1) has five subunits: alpha(3), beta(3), gamma(1), delta(1), epsilon(1). CF(0) has three main subunits: a, b and c.

The protein resides in the cell inner membrane. Functionally, produces ATP from ADP in the presence of a proton gradient across the membrane. This Bdellovibrio bacteriovorus (strain ATCC 15356 / DSM 50701 / NCIMB 9529 / HD100) protein is ATP synthase epsilon chain.